A 461-amino-acid chain; its full sequence is A-type ATP synthase subunit B (461 aa).

This sequence belongs to the ATPase alpha/beta chains family. As to quaternary structure, has multiple subunits with at least A(3), B(3), C, D, E, F, H, I and proteolipid K(x).

It is found in the cell membrane. In terms of biological role, component of the A-type ATP synthase that produces ATP from ADP in the presence of a proton gradient across the membrane. The B chain is a regulatory subunit. The sequence is that of A-type ATP synthase subunit B from Methanoculleus marisnigri (strain ATCC 35101 / DSM 1498 / JR1).